A 193-amino-acid polypeptide reads, in one-letter code: Acyl-homoserine-lactone synthase (193 aa).

Belongs to the autoinducer synthase family.

It catalyses the reaction a fatty acyl-[ACP] + S-adenosyl-L-methionine = an N-acyl-L-homoserine lactone + S-methyl-5'-thioadenosine + holo-[ACP] + H(+). Its function is as follows. Required for the synthesis of OHHL (N-(3-oxohexanoyl)-L-homoserine lactone) also known as VAI or N-(beta-ketocaproyl)homoserine lactone or 3-oxo-N-(tetrahydro-2-oxo-3-furanyl)-hexanamide, an autoinducer molecule which binds to LuxR and thus acts in bioluminescence regulation. This is Acyl-homoserine-lactone synthase (luxI) from Aliivibrio fischeri (strain ATCC 700601 / ES114) (Vibrio fischeri).